Consider the following 380-residue polypeptide: F-box protein At4g18380 (380 aa).

The F-box domain maps to 22–70; it reads IDHFDNLPDSILLLIFNNIGDVKALGRCSVVSKRFHSLIPQVENVFVRV.

This chain is F-box protein At4g18380, found in Arabidopsis thaliana (Mouse-ear cress).